A 296-amino-acid polypeptide reads, in one-letter code: N-acetylmuramic acid 6-phosphate etherase (296 aa).

The SIS domain occupies 54–217 (VIASFQQGGR…STTAMVGIGK (164 aa)). Glutamate 82 acts as the Proton donor in catalysis. Glutamate 113 is a catalytic residue.

Belongs to the GCKR-like family. MurNAc-6-P etherase subfamily. As to quaternary structure, homodimer.

It carries out the reaction N-acetyl-D-muramate 6-phosphate + H2O = N-acetyl-D-glucosamine 6-phosphate + (R)-lactate. The protein operates within amino-sugar metabolism; N-acetylmuramate degradation. Specifically catalyzes the cleavage of the D-lactyl ether substituent of MurNAc 6-phosphate, producing GlcNAc 6-phosphate and D-lactate. This is N-acetylmuramic acid 6-phosphate etherase from Shouchella clausii (strain KSM-K16) (Alkalihalobacillus clausii).